The following is a 60-amino-acid chain: UPF0434 protein PC1_1771 (60 aa).

This sequence belongs to the UPF0434 family.

The chain is UPF0434 protein PC1_1771 from Pectobacterium carotovorum subsp. carotovorum (strain PC1).